We begin with the raw amino-acid sequence, 400 residues long: Enoyl-[acyl-carrier-protein] reductase [NADH] (400 aa).

NAD(+) contacts are provided by residues 48 to 53 (GASTGY), 74 to 75 (FE), 111 to 112 (DA), and 139 to 140 (LA). Y225 contributes to the substrate binding site. The Proton donor role is filled by Y235. NAD(+) contacts are provided by residues K244 and 273-275 (VVT).

It belongs to the TER reductase family. As to quaternary structure, monomer.

It carries out the reaction a 2,3-saturated acyl-[ACP] + NAD(+) = a (2E)-enoyl-[ACP] + NADH + H(+). The protein operates within lipid metabolism; fatty acid biosynthesis. Involved in the final reduction of the elongation cycle of fatty acid synthesis (FAS II). Catalyzes the reduction of a carbon-carbon double bond in an enoyl moiety that is covalently linked to an acyl carrier protein (ACP). In Burkholderia ambifaria (strain MC40-6), this protein is Enoyl-[acyl-carrier-protein] reductase [NADH].